The sequence spans 359 residues: 4-hydroxy-3-methylbut-2-en-1-yl diphosphate synthase (flavodoxin) (359 aa).

Residues Cys-264, Cys-267, Cys-299, and Glu-306 each contribute to the [4Fe-4S] cluster site.

This sequence belongs to the IspG family. It depends on [4Fe-4S] cluster as a cofactor.

It carries out the reaction (2E)-4-hydroxy-3-methylbut-2-enyl diphosphate + oxidized [flavodoxin] + H2O + 2 H(+) = 2-C-methyl-D-erythritol 2,4-cyclic diphosphate + reduced [flavodoxin]. It participates in isoprenoid biosynthesis; isopentenyl diphosphate biosynthesis via DXP pathway; isopentenyl diphosphate from 1-deoxy-D-xylulose 5-phosphate: step 5/6. In terms of biological role, converts 2C-methyl-D-erythritol 2,4-cyclodiphosphate (ME-2,4cPP) into 1-hydroxy-2-methyl-2-(E)-butenyl 4-diphosphate. The sequence is that of 4-hydroxy-3-methylbut-2-en-1-yl diphosphate synthase (flavodoxin) from Helicobacter pylori (strain J99 / ATCC 700824) (Campylobacter pylori J99).